The primary structure comprises 155 residues: Regulatory protein RecX (155 aa).

It belongs to the RecX family.

It is found in the cytoplasm. Modulates RecA activity. The sequence is that of Regulatory protein RecX from Pseudomonas syringae pv. tomato (strain ATCC BAA-871 / DC3000).